The sequence spans 173 residues: Large ribosomal subunit protein uL16 (173 aa).

This sequence belongs to the universal ribosomal protein uL16 family.

This chain is Large ribosomal subunit protein uL16, found in Methanosarcina acetivorans (strain ATCC 35395 / DSM 2834 / JCM 12185 / C2A).